Consider the following 492-residue polypeptide: Vacuolar fusion protein CCZ1 homolog (492 aa).

The segment at 255-275 is disordered; sequence SVHAGPTSSSSNGTASVERPL. Residues 260-269 show a composition bias toward polar residues; sequence PTSSSSNGTA.

This sequence belongs to the CCZ1 family. As to quaternary structure, interacts with MON1.

The protein localises to the endosome. It is found in the prevacuolar compartment. In terms of biological role, plays an important role in membrane trafficking through the secretory apparatus. In complex with MON1, acts as a guanine exchange factor (GEF) for Rab7 protein family. Promotes the exchange of GDP to GTP, converting it from an inactive GDP-bound form into an active GTP-bound form. The active form is involved in protein trafficking from prevacuolar compartments (PVCs) to vacuoles. May serve as a linker between Rab5 and Rab7 protein families in PVCs and mediate PVC maturation. The polypeptide is Vacuolar fusion protein CCZ1 homolog (Oryza sativa subsp. japonica (Rice)).